A 143-amino-acid polypeptide reads, in one-letter code: Large ribosomal subunit protein uL11 (143 aa).

It belongs to the universal ribosomal protein uL11 family. As to quaternary structure, part of the ribosomal stalk of the 50S ribosomal subunit. Interacts with L10 and the large rRNA to form the base of the stalk. L10 forms an elongated spine to which L12 dimers bind in a sequential fashion forming a multimeric L10(L12)X complex. In terms of processing, one or more lysine residues are methylated.

Functionally, forms part of the ribosomal stalk which helps the ribosome interact with GTP-bound translation factors. The protein is Large ribosomal subunit protein uL11 of Teredinibacter turnerae (strain ATCC 39867 / T7901).